Consider the following 28-residue polypeptide: Humanin-like 4 (28 aa).

The protein belongs to the humanin family. Highly expressed in testis. Also expressed in kidney, heart, skeletal muscles and brain.

Its subcellular location is the secreted. It is found in the cytoplasm. In terms of biological role, plays a role as a neuroprotective and antiapoptotic factor. The protein is Humanin-like 4 of Homo sapiens (Human).